The primary structure comprises 342 residues: MFSSLYPLARASLFKMDAEDAHHLTLRMLGAAGRTGLACALSPRVPDAPRTVMGLSFRNPVGLAAGLDKDGAAIDGFAALGFGFIEVGTVTPRAQPGNPRPRLFRLPEADAIINRMGFNNSGVDQFVKNVQAARYRGVLGLNIGKNADTPIERAADDYLYCLERVYPFASYVTINISSPNTKNLRQLQGAGELDALLAALKDKQRRLADLHGKLVPLALKIAPDLDDEQVKEIAATLLRHDIEGVIATNTTLSREAVKGLPHADEAGGLSGRPVFDASNAVIRKLRAELGDAVPIIGVGGIFSGEDARAKLAAGAALVQLYTGFIYRGPALVAECVKAIARG.

Residues 65 to 69 (AGLDK) and threonine 89 contribute to the FMN site. Lysine 69 lines the substrate pocket. 114–118 (NRMGF) provides a ligand contact to substrate. The FMN site is built by asparagine 142 and asparagine 175. Asparagine 175 is a binding site for substrate. The Nucleophile role is filled by serine 178. A substrate-binding site is contributed by asparagine 180. FMN contacts are provided by lysine 220 and threonine 248. A substrate-binding site is contributed by 249-250 (NT). FMN-binding positions include glycine 271, glycine 300, and 321-322 (YT).

Belongs to the dihydroorotate dehydrogenase family. Type 2 subfamily. Monomer. It depends on FMN as a cofactor.

Its subcellular location is the cell membrane. The enzyme catalyses (S)-dihydroorotate + a quinone = orotate + a quinol. It participates in pyrimidine metabolism; UMP biosynthesis via de novo pathway; orotate from (S)-dihydroorotate (quinone route): step 1/1. Functionally, catalyzes the conversion of dihydroorotate to orotate with quinone as electron acceptor. In Burkholderia pseudomallei (strain 668), this protein is Dihydroorotate dehydrogenase (quinone).